A 486-amino-acid polypeptide reads, in one-letter code: MSHFLPTLILTSLTLVAYVLARMIYNVFYHPLSAFPGDAFFCATGLTKAYHMIAGDLQLKVKDMHDKYGSVVRIAPTELSFSYCSAWKDIYGSRGGRELSKFYDFYRVDEAMPQHIISAGKAKHSILRRYLAHGFSENAMKAQEPVILDLVNLLMQRLREHAEEGARVVDVNKWFNFATFEIIGKLTFGADLGNLRNRDWHPWVKGSANNNMVVGFMAAANSVGLGPIIKWCISNEILPRQKYLDELAEMVQKRTGVTVERPDFIQGLLRDDVQLSNGEIVANVEALIGAGSESTATLLTGTVCALLQNPDQLAKVIDEVRSTFRTEDEITLHSVQRLDYMLACLNETFRYYPPVTNGMPRVTPKEGAIIGGRLVPGNTVVAIWQWAICHDPALWKDPYTFRPERFLEAPEFSTDVREALNPFSVGTRNCIGRNLSYAETRLILARLFYYFDLELADPDQDWFGAQKAYLVWDAPALNMYLKPVVR.

The signal sequence occupies residues 1 to 21 (MSHFLPTLILTSLTLVAYVLA). Asn-346 carries N-linked (GlcNAc...) asparagine glycosylation. Cys-430 contacts heme. Asn-434 carries an N-linked (GlcNAc...) asparagine glycan.

It belongs to the cytochrome P450 family. Heme serves as cofactor.

It participates in mycotoxin biosynthesis. Its function is as follows. Cytochrome P450 monooxygenase; part of the gene cluster that mediates the biosynthesis of aphidicolin, a specific inhibitor of eukaryotic DNA synthesis and DNA polymerase alpha. The geranylgeranyl pyrophosphate synthase GGS is required for supplying a sufficient amount of geranylgeranyl diphosphate (GGDP), the general precursor of diterpenes. The diterpene synthase ACS then catalyzes the conversion of geranylgeranyl diphosphate to aphidicolan-16-beta-ol via the intermediate syn-copalyldiphosphate (syn-CDP). In addition to aphidicolan-16-beta-ol, the enzyme also produces low levels of amphidicol-15-ene and amphidicol-16-ene. The cytochrome P450 monooxygenase P450-2 then catalyzes the two-step hydroxylation from aphidicolan-16-beta-ol to 3-deoxyaphidicolin via a 17,3-deoxyaphidicolin intermediate. Finally, the cytochrome P450 monooxygenase P450-1 converts 3-deoxyaphidicolin to aphidicolin. In Neocamarosporium betae (Beet black rot fungus), this protein is Cytochrome P450 monooxygenase 1 (PbP450-1).